A 105-amino-acid polypeptide reads, in one-letter code: MTVSCSKVLLSLCLFLILLEATHESNQQRTNYREFSEIQLAQETREINEKNNQLLNQQLPRLNRRKRLWRDEDRRTFCTTLCPCEDRRKRAAVTPPTRKVPCCCP.

The N-terminal stretch at M1–A21 is a signal peptide.

The protein belongs to the scolopendra neurotoxin 10 family. Post-translationally, contains 3 disulfide bonds. Expressed by the venom gland.

Its subcellular location is the secreted. The protein is Putative neurotoxin 10 of Scolopendra mutilans (Chinese red-headed centipede).